We begin with the raw amino-acid sequence, 471 residues long: MATATATDRLSNLKSSVAGLNQISENEKSGFINLVARYLSGEAQHVEWSKIQTPTDEVVVPYDTLAPTPDGSLEIKNLLDKLVVLKLNGGLGTTMGCTGPKSVIEVRDGLTFLDLIVIQIENLNSKYGSNVPLLLMNSFNTHDDTQTIVEKYQNSNIEIHTFNQSQYPRLVVDDFLPLPSKGRTDKDGWYPPGHGSMFPSLSNSGKLDALISQGKEYVFVANSDNLGAIVDLKILNHLVAHKNEYCMEVTPKTLADVKGGTLISYEGRVQLLEIAQVPDEHVGEFKSIEKFKIFNTNNLWVNLKAIKRLVEADALKMEIIPNPKEVDGVKVLQLETAAGAAIRFFDKAIGINVPRSRFLPVKATSDLLLVQSDLYTVENGSVIRNKARTNPENPSIELGPEFKKVSNFLGRFKSIPSIVELDSLKVVGDVWFGTGVILKGKVSIVAKSGVKVEIPDGAVIANKEINGPKDL.

Residues 87 to 90 (LNGG), Lys101, Gln164, and Gly193 contribute to the UTP site. Residue 89 to 90 (GG) coordinates substrate. Substrate is bound by residues His194 and 222–224 (NSD). Asp224 and Lys362 together coordinate UTP.

This sequence belongs to the UDPGP type 1 family.

It is found in the cytoplasm. The catalysed reaction is alpha-D-glucose 1-phosphate + UTP + H(+) = UDP-alpha-D-glucose + diphosphate. Functionally, plays a central role as a glucosyl donor in cellular metabolic pathways. The polypeptide is UTP--glucose-1-phosphate uridylyltransferase (UGP) (Astragalus penduliflorus (Mountain lentil)).